The following is a 628-amino-acid chain: EF-hand calcium-binding domain-containing protein 7 (628 aa).

Residues 1-22 (MASNPGSDAALGTQNPLLSGSP) are compositionally biased toward polar residues. The tract at residues 1–24 (MASNPGSDAALGTQNPLLSGSPRT) is disordered. 2 consecutive EF-hand domains span residues 102-137 (TSKAELLKSFKKLDVNDDGAILHSDLQKYLTKRGEK) and 138-173 (MTQEEVNAVINLADINANGKFDYVKFCKLYMTTSEQ). Residues 192–231 (QFGSHMEGSPERGPSPAPKPSPRVIRKNDQETFSSKGDTS) form a disordered region. A phosphoserine mark is found at Ser-200 and Ser-212. Residues 222-231 (ETFSSKGDTS) are compositionally biased toward polar residues. The 36-residue stretch at 402 to 437 (EFRSTLSEIFEVIDLDGNGLISLEEYNFFELRTSGE) folds into the EF-hand 3 domain. Asp-415, Asp-417, Asn-419, and Glu-426 together coordinate Ca(2+).

Component of the EvC complex composed of EFCAB7, IQCE, EVC2 and EVC; built from two subcomplexes, EVC2:EVC and EFCAB7:IQCE. Interacts (via EF-hand 1 and 2) with IQCE (via N-terminus); this interaction anchors the EVC-EVC2 complex in a signaling microdomain at the base of cilia and stimulates the Hedgehog (Hh) pathway. Interacts with EVC2 (via N-terminal end). Interacts with EVC.

It is found in the cell projection. It localises to the cilium membrane. Component of the EvC complex that positively regulates ciliary Hedgehog (Hh) signaling. Required for the localization of the EVC2:EVC subcomplex at the base of primary cilia. This is EF-hand calcium-binding domain-containing protein 7 (Efcab7) from Mus musculus (Mouse).